We begin with the raw amino-acid sequence, 139 residues long: Small ribosomal subunit protein uS9 (139 aa).

Belongs to the universal ribosomal protein uS9 family.

This is Small ribosomal subunit protein uS9 from Coxiella burnetii (strain CbuK_Q154) (Coxiella burnetii (strain Q154)).